The chain runs to 224 residues: Glutathione S-transferase Mu 5 (224 aa).

Positions 4 to 91 (KSMVLGYWDI…YIARKHNMCG (88 aa)) constitute a GST N-terminal domain. At serine 5 the chain carries Phosphoserine. Residues 10–11 (YW), 49–53 (WLDVK), 62–63 (NL), and 75–76 (QS) contribute to the glutathione site. The GST C-terminal domain occupies 93–211 (TEEEKIRVDI…QSDRFFKMPI (119 aa)). Position 119 (tyrosine 119) interacts with substrate.

This sequence belongs to the GST superfamily. Mu family. Homodimer. Interacts with PFKM isoform 2 and isoform 3 (via N-terminal testis-specific region).

Its subcellular location is the cytoplasm. The enzyme catalyses RX + glutathione = an S-substituted glutathione + a halide anion + H(+). In terms of biological role, conjugation of reduced glutathione to a wide number of exogenous and endogenous hydrophobic electrophiles. In Mus musculus (Mouse), this protein is Glutathione S-transferase Mu 5 (Gstm5).